The chain runs to 94 residues: Co-chaperonin GroES (94 aa).

Belongs to the GroES chaperonin family. As to quaternary structure, heptamer of 7 subunits arranged in a ring. Interacts with the chaperonin GroEL.

Its subcellular location is the cytoplasm. Functionally, together with the chaperonin GroEL, plays an essential role in assisting protein folding. The GroEL-GroES system forms a nano-cage that allows encapsulation of the non-native substrate proteins and provides a physical environment optimized to promote and accelerate protein folding. GroES binds to the apical surface of the GroEL ring, thereby capping the opening of the GroEL channel. This is Co-chaperonin GroES from Ligilactobacillus salivarius (strain UCC118) (Lactobacillus salivarius).